Here is a 206-residue protein sequence, read N- to C-terminus: Outer-membrane lipoprotein LolB (206 aa).

The signal sequence occupies residues methionine 1 to glycine 18. A lipid anchor (N-palmitoyl cysteine) is attached at cysteine 19. A lipid anchor (S-diacylglycerol cysteine) is attached at cysteine 19.

Belongs to the LolB family. Monomer.

The protein resides in the cell outer membrane. In terms of biological role, plays a critical role in the incorporation of lipoproteins in the outer membrane after they are released by the LolA protein. This Stutzerimonas stutzeri (strain A1501) (Pseudomonas stutzeri) protein is Outer-membrane lipoprotein LolB.